A 247-amino-acid chain; its full sequence is Carboxy-S-adenosyl-L-methionine synthase (247 aa).

S-adenosyl-L-methionine-binding positions include Y39, 64–66, 89–90, 117–118, N132, and R199; these read GCS, DN, and DI.

This sequence belongs to the class I-like SAM-binding methyltransferase superfamily. Cx-SAM synthase family. In terms of assembly, homodimer.

The enzyme catalyses prephenate + S-adenosyl-L-methionine = carboxy-S-adenosyl-L-methionine + 3-phenylpyruvate + H2O. Functionally, catalyzes the conversion of S-adenosyl-L-methionine (SAM) to carboxy-S-adenosyl-L-methionine (Cx-SAM). This is Carboxy-S-adenosyl-L-methionine synthase from Salmonella arizonae (strain ATCC BAA-731 / CDC346-86 / RSK2980).